A 480-amino-acid polypeptide reads, in one-letter code: MTLSFTAHWRDELPATYTALLPTPLKNARLIWYNDKLAQQLAIPASLFDVTNGAGVWGGETLLPGMSPVAQVYSGHQFGVWAGQLGDGRGILLGEQLLADGSTLDWHLKGAGLTPYSRMGDGRAVLRSTIRESLASEAMHYLGIPTTRALSIVTSDTPVQRETQEAGAMLMRLAQSHMRFGHFEHFYYRREPEKVQQLADFAIRHYWPQWQDAPEKYDLWFEEVAARTGRLIADWQTIGFAHGVMNTDNMSILGLTIDYGPFGFLDDYDPGFIGNHSDHQGRYRFDNQPSVALWNLQRLAQTLTPFIEIDALNRALDRYQDALLTRYGQRMRQKLGFFTEQKDDNVLLNELFSLMAREGSDYTRTFRMLSHTEQQSASSPLRDTFIDRAAFDGWFDRYRARLRTEAVDDALRQQQMQSVNPAVVLRNWLAQRAIDAAEQGDMAELHRLHEILRQPFIDRDDDYASRPPEWGKRLEVSCSS.

ATP-binding residues include glycine 86, glycine 88, arginine 89, lysine 109, aspartate 121, glycine 122, arginine 172, and arginine 179. Aspartate 248 acts as the Proton acceptor in catalysis. The Mg(2+) site is built by asparagine 249 and aspartate 258. Residue aspartate 258 coordinates ATP.

It belongs to the SELO family. Mg(2+) is required as a cofactor. Mn(2+) serves as cofactor.

The catalysed reaction is L-seryl-[protein] + ATP = 3-O-(5'-adenylyl)-L-seryl-[protein] + diphosphate. It catalyses the reaction L-threonyl-[protein] + ATP = 3-O-(5'-adenylyl)-L-threonyl-[protein] + diphosphate. It carries out the reaction L-tyrosyl-[protein] + ATP = O-(5'-adenylyl)-L-tyrosyl-[protein] + diphosphate. The enzyme catalyses L-histidyl-[protein] + UTP = N(tele)-(5'-uridylyl)-L-histidyl-[protein] + diphosphate. The catalysed reaction is L-seryl-[protein] + UTP = O-(5'-uridylyl)-L-seryl-[protein] + diphosphate. It catalyses the reaction L-tyrosyl-[protein] + UTP = O-(5'-uridylyl)-L-tyrosyl-[protein] + diphosphate. In terms of biological role, nucleotidyltransferase involved in the post-translational modification of proteins. It can catalyze the addition of adenosine monophosphate (AMP) or uridine monophosphate (UMP) to a protein, resulting in modifications known as AMPylation and UMPylation. The polypeptide is Protein nucleotidyltransferase YdiU (Salmonella arizonae (strain ATCC BAA-731 / CDC346-86 / RSK2980)).